A 341-amino-acid polypeptide reads, in one-letter code: Peptidoglycan recognition protein 3 (341 aa).

The signal sequence occupies residues 1 to 17; it reads MGTLPWLLAFFILGLQA. 2 N-acetylmuramoyl-L-alanine amidase domains span residues 77-179 and 200-325; these read TIGW…KVCP and PAKY…ILSP. The N-linked (GlcNAc...) asparagine glycan is linked to Asn-113. Disulfide bonds link Cys-178-Cys-300, Cys-194-Cys-238, and Cys-214-Cys-220. The peptidoglycan site is built by His-231, Arg-235, and Tyr-242. Residues 264–269 are interaction with murein; it reads HTYGFN.

Belongs to the N-acetylmuramoyl-L-alanine amidase 2 family. In terms of assembly, monomer. Homodimer; disulfide-linked. Heterodimer with PGLYRP4; disulfide-linked. Post-translationally, N-glycosylated. In terms of tissue distribution, detected in skin epidermis, eccrine sweat glands and ducts, ciliary body epithelial cells of the eye, in small intestine, colon, stomach and in mature epithelial cells of the tongue (at protein level). Highly expressed in skin and esophagus, expressed also in tonsils and thymus and to a much lesser extent in the stomach, descending colon, rectum and brain.

The protein resides in the secreted. In terms of biological role, pattern receptor that binds to murein peptidoglycans (PGN) of Gram-positive bacteria. Has bactericidal activity towards Gram-positive bacteria. May kill Gram-positive bacteria by interfering with peptidoglycan biosynthesis. Also binds to Gram-negative bacteria, and has bacteriostatic activity towards Gram-negative bacteria. Plays a role in innate immunity. This chain is Peptidoglycan recognition protein 3 (PGLYRP3), found in Homo sapiens (Human).